We begin with the raw amino-acid sequence, 330 residues long: Phenylalanine--tRNA ligase alpha subunit (330 aa).

Position 257 (Glu257) interacts with Mg(2+).

This sequence belongs to the class-II aminoacyl-tRNA synthetase family. Phe-tRNA synthetase alpha subunit type 1 subfamily. Tetramer of two alpha and two beta subunits. Requires Mg(2+) as cofactor.

The protein localises to the cytoplasm. The catalysed reaction is tRNA(Phe) + L-phenylalanine + ATP = L-phenylalanyl-tRNA(Phe) + AMP + diphosphate + H(+). This is Phenylalanine--tRNA ligase alpha subunit from Nostoc sp. (strain PCC 7120 / SAG 25.82 / UTEX 2576).